Reading from the N-terminus, the 383-residue chain is Succinyl-diaminopimelate desuccinylase (383 aa).

Position 79 (His79) interacts with Zn(2+). The active site involves Asp81. Asp110 is a binding site for Zn(2+). The active-site Proton acceptor is the Glu141. Residues Glu142, Glu170, and His355 each coordinate Zn(2+).

The protein belongs to the peptidase M20A family. DapE subfamily. Homodimer. Zn(2+) is required as a cofactor. Requires Co(2+) as cofactor.

The enzyme catalyses N-succinyl-(2S,6S)-2,6-diaminopimelate + H2O = (2S,6S)-2,6-diaminopimelate + succinate. The protein operates within amino-acid biosynthesis; L-lysine biosynthesis via DAP pathway; LL-2,6-diaminopimelate from (S)-tetrahydrodipicolinate (succinylase route): step 3/3. Its function is as follows. Catalyzes the hydrolysis of N-succinyl-L,L-diaminopimelic acid (SDAP), forming succinate and LL-2,6-diaminopimelate (DAP), an intermediate involved in the bacterial biosynthesis of lysine and meso-diaminopimelic acid, an essential component of bacterial cell walls. This Helicobacter pylori (strain Shi470) protein is Succinyl-diaminopimelate desuccinylase.